The following is a 532-amino-acid chain: Phosphoenolpyruvate carboxykinase (ATP) (532 aa).

Residues Arg60, Tyr194, and Lys200 each coordinate substrate. Residues Lys200, His219, and 237–245 (GLSGTGKTT) each bind ATP. Positions 200 and 219 each coordinate Mn(2+). Asp258 contacts Mn(2+). Positions 286, 324, and 449 each coordinate ATP. Arg324 provides a ligand contact to substrate.

It belongs to the phosphoenolpyruvate carboxykinase (ATP) family. Mn(2+) is required as a cofactor.

The protein localises to the cytoplasm. It carries out the reaction oxaloacetate + ATP = phosphoenolpyruvate + ADP + CO2. It functions in the pathway carbohydrate biosynthesis; gluconeogenesis. Functionally, involved in the gluconeogenesis. Catalyzes the conversion of oxaloacetate (OAA) to phosphoenolpyruvate (PEP) through direct phosphoryl transfer between the nucleoside triphosphate and OAA. The chain is Phosphoenolpyruvate carboxykinase (ATP) from Cereibacter sphaeroides (strain ATCC 17029 / ATH 2.4.9) (Rhodobacter sphaeroides).